A 97-amino-acid chain; its full sequence is Co-chaperonin GroES (97 aa).

This sequence belongs to the GroES chaperonin family. As to quaternary structure, heptamer of 7 subunits arranged in a ring. Interacts with the chaperonin GroEL.

It localises to the cytoplasm. Its function is as follows. Together with the chaperonin GroEL, plays an essential role in assisting protein folding. The GroEL-GroES system forms a nano-cage that allows encapsulation of the non-native substrate proteins and provides a physical environment optimized to promote and accelerate protein folding. GroES binds to the apical surface of the GroEL ring, thereby capping the opening of the GroEL channel. This Pectobacterium atrosepticum (strain SCRI 1043 / ATCC BAA-672) (Erwinia carotovora subsp. atroseptica) protein is Co-chaperonin GroES.